Here is a 122-residue protein sequence, read N- to C-terminus: Large ribosomal subunit protein bL12 (122 aa).

It belongs to the bacterial ribosomal protein bL12 family. In terms of assembly, homodimer. Part of the ribosomal stalk of the 50S ribosomal subunit. Forms a multimeric L10(L12)X complex, where L10 forms an elongated spine to which 2 to 4 L12 dimers bind in a sequential fashion. Binds GTP-bound translation factors.

In terms of biological role, forms part of the ribosomal stalk which helps the ribosome interact with GTP-bound translation factors. Is thus essential for accurate translation. The chain is Large ribosomal subunit protein bL12 from Yersinia pseudotuberculosis serotype O:1b (strain IP 31758).